A 434-amino-acid polypeptide reads, in one-letter code: Probable carboxypeptidase BDBG_01803 (434 aa).

The signal sequence occupies residues 1–20 (MKLSHLAAALSAQLVAPVAA). 3 N-linked (GlcNAc...) asparagine glycosylation sites follow: N35, N136, and N150. D160 contributes to the Zn(2+) binding site. The active-site Proton acceptor is the E192. E193 is a Zn(2+) binding site. A glycan (N-linked (GlcNAc...) asparagine) is linked at N343.

This sequence belongs to the peptidase M20A family. Zn(2+) serves as cofactor.

The protein resides in the secreted. In Blastomyces gilchristii (strain SLH14081) (Blastomyces dermatitidis), this protein is Probable carboxypeptidase BDBG_01803.